Here is a 245-residue protein sequence, read N- to C-terminus: 1-(5-phosphoribosyl)-5-[(5-phosphoribosylamino)methylideneamino] imidazole-4-carboxamide isomerase (245 aa).

The active-site Proton acceptor is D8. D129 (proton donor) is an active-site residue.

It belongs to the HisA/HisF family.

The protein resides in the cytoplasm. It catalyses the reaction 1-(5-phospho-beta-D-ribosyl)-5-[(5-phospho-beta-D-ribosylamino)methylideneamino]imidazole-4-carboxamide = 5-[(5-phospho-1-deoxy-D-ribulos-1-ylimino)methylamino]-1-(5-phospho-beta-D-ribosyl)imidazole-4-carboxamide. It participates in amino-acid biosynthesis; L-histidine biosynthesis; L-histidine from 5-phospho-alpha-D-ribose 1-diphosphate: step 4/9. The polypeptide is 1-(5-phosphoribosyl)-5-[(5-phosphoribosylamino)methylideneamino] imidazole-4-carboxamide isomerase (Geotalea uraniireducens (strain Rf4) (Geobacter uraniireducens)).